The chain runs to 610 residues: NTPase KAP family P-loop domain-containing protein 1 (610 aa).

Positions 1-414 (MQQEAAQRES…NTVPITVRLL (414 aa)) constitute a KAP NTPase domain. Helical transmembrane passes span 22 to 42 (AVSG…QPII), 118 to 138 (VCLG…LLYL), and 157 to 177 (VFGG…VYSV). Residues 540-587 (ALKPPSPPKSPTRDTPHAAHRANSASRAPPSGRASGQAGEGHHTGDLA) are disordered. Over residues 560–575 (RANSASRAPPSGRASG) the composition is skewed to low complexity.

The protein resides in the membrane. This is NTPase KAP family P-loop domain-containing protein 1 (NKPD1) from Homo sapiens (Human).